Here is a 273-residue protein sequence, read N- to C-terminus: Phosphatidylglycerol--prolipoprotein diacylglyceryl transferase (273 aa).

7 consecutive transmembrane segments (helical) span residues 21–41 (VSIR…LWLA), 60–80 (LLFA…VIFY), 95–115 (VWTG…AMFW), 124–144 (FFGV…MGRM), 176–196 (SQLY…NWFI), 203–223 (GSVS…VEFV), and 237–257 (ISMG…MMVW). Arg143 lines the a 1,2-diacyl-sn-glycero-3-phospho-(1'-sn-glycerol) pocket.

The protein belongs to the Lgt family.

It is found in the cell inner membrane. The catalysed reaction is L-cysteinyl-[prolipoprotein] + a 1,2-diacyl-sn-glycero-3-phospho-(1'-sn-glycerol) = an S-1,2-diacyl-sn-glyceryl-L-cysteinyl-[prolipoprotein] + sn-glycerol 1-phosphate + H(+). Its pathway is protein modification; lipoprotein biosynthesis (diacylglyceryl transfer). Catalyzes the transfer of the diacylglyceryl group from phosphatidylglycerol to the sulfhydryl group of the N-terminal cysteine of a prolipoprotein, the first step in the formation of mature lipoproteins. The chain is Phosphatidylglycerol--prolipoprotein diacylglyceryl transferase from Vibrio parahaemolyticus serotype O3:K6 (strain RIMD 2210633).